The following is a 231-amino-acid chain: MRMIRAIKQGQWAVLLWPYLLTASIPLDCRDEQGVLSHCPSISQEKLLDRVIQHAELIYRVSEESCSLFEEMFIPFPLQLQRNQAGYPCITKALPIPSSKSEIQQISDKWLLHSVLMLVQSWIEPLVYLQTTLNRYDGVPDMLLNKTKWVSEKLMSLEQGVVVLIKKMLDEEMMTTTYSEQGLFQDDGQPEMLEYVMRDYTLLSCFKKDAHKMEILLKLLKCRQNDMHSCR.

Residues 1–24 (MRMIRAIKQGQWAVLLWPYLLTAS) form the signal peptide. 3 cysteine pairs are disulfide-bonded: C29–C39, C89–C205, and C222–C230. N145 carries an N-linked (GlcNAc...) asparagine glycan.

The protein belongs to the somatotropin/prolactin family. In terms of tissue distribution, pituitary gland.

The protein resides in the secreted. This is Somatolactin-1 from Sparus aurata (Gilthead sea bream).